The sequence spans 446 residues: Probable D-serine dehydratase (446 aa).

Position 116 is an N6-(pyridoxal phosphate)lysine (Lys-116).

This sequence belongs to the serine/threonine dehydratase family. DsdA subfamily. Pyridoxal 5'-phosphate serves as cofactor.

The enzyme catalyses D-serine = pyruvate + NH4(+). The protein is Probable D-serine dehydratase of Bacillus thuringiensis (strain Al Hakam).